The chain runs to 626 residues: Serine/threonine-protein kinase ATG1a (626 aa).

In terms of domain architecture, Protein kinase spans 10–268 (YALGPRIGSG…FREFFNHMFL (259 aa)). ATP contacts are provided by residues 16–24 (IGSGSFAVV) and Lys39. Asp132 functions as the Proton acceptor in the catalytic mechanism. A compositionally biased stretch (polar residues) spans 288 to 308 (KSLLPSAQPSTSTNRFKSSAE). The interval 288-347 (KSLLPSAQPSTSTNRFKSSAENVHKHGSSSSASNSQISMPHTSFEKTRKDTEGQCSSNQS) is disordered. Low complexity predominate over residues 315 to 325 (SSSSASNSQIS). The segment covering 330-339 (SFEKTRKDTE) has biased composition (basic and acidic residues). The AIM (Atg8-family-interacting motif) signature appears at 360–363 (YVLV).

This sequence belongs to the protein kinase superfamily. Ser/Thr protein kinase family. Interacts with ATG13A. Interacts with ATG8E. Binds to ATG8E on autophagic vesicles. Post-translationally, phosphorylated during nutrient starvation. Dephosphorylated in nutrient-rich conditions.

The protein resides in the cytoplasmic vesicle. It localises to the autophagosome. Functionally, serine/threonine protein kinase involved in autophagy in a nutritional condition-dependent manner. The ATG1-ATG13 protein kinase complex regulates downstream events required for autophagosome enclosure and/or vacuolar delivery. Becomes a target of autophagy under nutrient starvation. Connects autophagy to plant nutritional status. This chain is Serine/threonine-protein kinase ATG1a, found in Arabidopsis thaliana (Mouse-ear cress).